A 352-amino-acid chain; its full sequence is (2E,6E)-farnesyl diphosphate synthase (352 aa).

The isopentenyl diphosphate site is built by lysine 43, arginine 46, and histidine 77. The Mg(2+) site is built by aspartate 84 and aspartate 88. A DDXXD motif motif is present at residues 84–88 (DDLID). Residue arginine 94 participates in isopentenyl diphosphate binding. The DDXXD motif signature appears at 236-240 (DDVLG).

The protein belongs to the FPP/GGPP synthase family. The cofactor is Mg(2+).

The catalysed reaction is isopentenyl diphosphate + dimethylallyl diphosphate = (2E)-geranyl diphosphate + diphosphate. The enzyme catalyses isopentenyl diphosphate + (2E)-geranyl diphosphate = (2E,6E)-farnesyl diphosphate + diphosphate. The protein operates within isoprenoid biosynthesis; geranyl diphosphate biosynthesis; geranyl diphosphate from dimethylallyl diphosphate and isopentenyl diphosphate: step 1/1. It functions in the pathway isoprenoid biosynthesis; farnesyl diphosphate biosynthesis; farnesyl diphosphate from geranyl diphosphate and isopentenyl diphosphate. Functionally, catalyzes the sequential condensations of isopentenyl pyrophosphate (IPP) with dimethylallyl diphosphate (DMAPP) to yield geranyl diphosphate (GPP) and with GPP to yield (2E,6E)-farnesyl diphosphate (E,E-FPP). In Mycobacterium tuberculosis (strain ATCC 25618 / H37Rv), this protein is (2E,6E)-farnesyl diphosphate synthase.